Here is a 228-residue protein sequence, read N- to C-terminus: Apoptosis regulator R1 (228 aa).

Positions 1–21 (LNPKKKENNGVKNGDREKQHE) are enriched in basic and acidic residues. A disordered region spans residues 1–29 (LNPKKKENNGVKNGDREKQHETGNTIFRG). A BH1 motif is present at residues 120–139 (SLFQGGVNWGRIVAFFVFGA). The BH2 motif lies at 171-186 (DWIQSNGGWNGFLTLY). The chain crosses the membrane as a helical span at residues 207 to 227 (TVLTGAVALGALMTVGALFAS).

Belongs to the Bcl-2 family.

It is found in the membrane. Its function is as follows. Could be the homolog of mammalian Bcl-W. The polypeptide is Apoptosis regulator R1 (Xenopus laevis (African clawed frog)).